A 414-amino-acid chain; its full sequence is Protein FAM81B (414 aa).

Residues 1–13 (MTSETDINKSASP) show a composition bias toward polar residues. The interval 1–43 (MTSETDINKSASPTAAAKEQPEEPDGPLPGSASEQEKKVRFSP) is disordered. Coiled coils occupy residues 70 to 94 (NTQRSQLEDRLNNQDRTIAFLLEQA), 121 to 149 (LLENHIQTITSIVKKLSQNIEMIEEQIKA), 188 to 223 (KLSGDIHFIRNEHQQLEKTIQEMISSLQTVSKNLDT), and 266 to 414 (LNLY…LQES).

It belongs to the FAM81 family.

In Bos taurus (Bovine), this protein is Protein FAM81B (FAM81B).